The sequence spans 302 residues: MQADLYPSRQEDQPSWQERLDPVVYRSDLENAPIAAELVERFERDGYLVIPNLFSADEVALFRAELERMRQDPAVAGSGKTIKEPDSGAIRSVFAIHKDNELFARVAADERTAGIARFILGGDLYVHQSRMNFKPGFTGKEFYWHSDFETWHIEDGMPRMRCLSCSILLTDNEPHNGPLMLMPGSHKHYVRCVGATPENHYEKSLRKQEIGIPDQNSLSELASRFGIDCATGPAGSVVFFDCNTMHGSNGNITPSARSNLFYVYNHVDNAVQAPFCEQKPRPAFVAERENFKPLDIRPQQYL.

Gln128 is an L-ectoine binding site. Residue Lys134 participates in 2-oxoglutarate binding. Residues His145, Asp147, and His246 each contribute to the Fe cation site.

It belongs to the PhyH family. EctD subfamily. Homodimer. Fe(2+) serves as cofactor.

The catalysed reaction is L-ectoine + 2-oxoglutarate + O2 = 5-hydroxyectoine + succinate + CO2. Involved in the biosynthesis of 5-hydroxyectoine, called compatible solute, which helps organisms to survive extreme osmotic stress by acting as a highly soluble organic osmolyte. Catalyzes the 2-oxoglutarate-dependent selective hydroxylation of L-ectoine to yield (4S,5S)-5-hydroxyectoine. The protein is Ectoine dioxygenase of Stutzerimonas stutzeri (strain A1501) (Pseudomonas stutzeri).